The primary structure comprises 526 residues: Cytochrome P450 monooxygenase SAT11 (526 aa).

The chain crosses the membrane as a helical span at residues 18-38 (AFLLIAMLYLGYLLCICFYNI). N125 and N447 each carry an N-linked (GlcNAc...) asparagine glycan. Position 455 (C455) interacts with heme. N-linked (GlcNAc...) asparagine glycosylation is present at N520.

It belongs to the cytochrome P450 family. The cofactor is heme.

It is found in the membrane. It participates in mycotoxin biosynthesis. In terms of biological role, cytochrome P450 monooxygenase; part of the satratoxin SC2 cluster involved in the biosynthesis of satratoxins, trichothecene mycotoxins that are associated with human food poisonings. Satratoxins are suggested to be made by products of multiple gene clusters (SC1, SC2 and SC3) that encode 21 proteins in all, including polyketide synthases, acetyltransferases, and other enzymes expected to modify the trichothecene skeleton. SC1 encodes 10 proteins, SAT1 to SAT10. The largest are SAT8, which encodes a putative polyketide synthase (PKS) with a conventional non-reducing architecture, and SAT10, a putative protein containing four ankyrin repeats and thus may be involved in protein scaffolding. The putative short-chain reductase SAT3 may assist the PKS in some capacity. SAT6 contains a secretory lipase domain and acts probably as a trichothecene esterase. SAT5 encodes a putative acetyltransferase, and so, with SAT6, may affect endogenous protection from toxicity. The probable transcription factor SAT9 may regulate the expression of the SC1 cluster. SC2 encodes proteins SAT11 to SAT16, the largest of which encodes the putative reducing PKS SAT13. SAT11 is a cytochrome P450 monooxygenase, while SAT14 and SAT16 are probable acetyltransferases. The SC2 cluster may be regulated by the transcription factor SAT15. SC3 is a small cluster that encodes 5 proteins, SAT17 to SAT21. SAT21 is a putative MFS-type transporter which may have a role in exporting secondary metabolites. The four other proteins putatively encoded in SC3 include the taurine hydroxylase-like protein SAT17, the O-methyltransferase SAT18, the acetyltransferase SAT19, and the Cys6-type zinc finger SAT20, the latter being probably involved in regulation of SC3 expression. The sequence is that of Cytochrome P450 monooxygenase SAT11 from Stachybotrys chartarum (strain CBS 109288 / IBT 7711) (Toxic black mold).